A 65-amino-acid polypeptide reads, in one-letter code: MEKLKEFLKGVRDELKRVVWPSRELVVKATISVIIFSLAIGVYLWILDLTFTKIISFILSLRGSL.

Residues 1 to 27 (MEKLKEFLKGVRDELKRVVWPSRELVV) lie on the Cytoplasmic side of the membrane. The chain crosses the membrane as a helical span at residues 28 to 59 (KATISVIIFSLAIGVYLWILDLTFTKIISFIL). Over 60–65 (SLRGSL) the chain is Periplasmic.

The protein belongs to the SecE/SEC61-gamma family. In terms of assembly, component of the Sec protein translocase complex. Heterotrimer consisting of SecY, SecE and SecG subunits. The heterotrimers can form oligomers, although 1 heterotrimer is thought to be able to translocate proteins. Interacts with SecDF, and other proteins may be involved. The channel interacts with SecA via subunit SecY.

It is found in the cell inner membrane. Functionally, essential subunit of the protein translocation channel SecYEG. Clamps together the 2 halves of SecY. May contact the channel plug during translocation. The polypeptide is Protein translocase subunit SecE (Aquifex aeolicus (strain VF5)).